A 285-amino-acid chain; its full sequence is G patch domain-containing protein 11 (285 aa).

A coiled-coil region spans residues 51-87; that stretch reads MLRQIREARRKEEKQQEANLKNRQKSLKEEEQERRDI. Residues 59-84 form a disordered region; that stretch reads RRKEEKQQEANLKNRQKSLKEEEQER. Positions 95–141 constitute a G-patch domain; the sequence is CENKGFALLQKMGYKSGQALGKSGGGIVEPIPLNIKTGKSGIGHEAS. Position 141 is a phosphoserine (Ser141). Lys149 is modified (N6-acetyllysine). The segment covering 218-235 has biased composition (acidic residues); sequence EETEEDEEEKEQDEDEYK. The interval 218 to 237 is disordered; sequence EETEEDEEEKEQDEDEYKSE.

This sequence belongs to the GPATCH11 family.

It localises to the chromosome. It is found in the centromere. The protein resides in the kinetochore. The chain is G patch domain-containing protein 11 (GPATCH11) from Homo sapiens (Human).